The primary structure comprises 325 residues: D-alanine--D-alanine ligase (325 aa).

The 199-residue stretch at 102–300 (KQIFRAAGIP…FTELVERMLQ (199 aa)) folds into the ATP-grasp domain. 130-185 (AAELGSPLVIKPSNNGSTVGISIVRDERSFAQGLELARSVSSRIFLERYVPGKEIT) lines the ATP pocket. Asp254, Glu267, and Asn269 together coordinate Mg(2+).

It belongs to the D-alanine--D-alanine ligase family. It depends on Mg(2+) as a cofactor. Mn(2+) is required as a cofactor.

It localises to the cytoplasm. It carries out the reaction 2 D-alanine + ATP = D-alanyl-D-alanine + ADP + phosphate + H(+). Its pathway is cell wall biogenesis; peptidoglycan biosynthesis. Cell wall formation. This Synechococcus sp. (strain JA-2-3B'a(2-13)) (Cyanobacteria bacterium Yellowstone B-Prime) protein is D-alanine--D-alanine ligase.